A 30-amino-acid chain; its full sequence is Uperin-6.2 (30 aa).

As to expression, expressed by the skin dorsal glands.

The protein localises to the secreted. This Uperoleia inundata (Floodplain toadlet) protein is Uperin-6.2.